A 176-amino-acid chain; its full sequence is F(420)H(2) dehydrogenase subunit J (176 aa).

5 consecutive transmembrane segments (helical) span residues 13–33 (TAVFGLLALVTVFFAIFVVIA), 39–59 (AGLALIMCMFGVAGLYILLNA), 64–84 (VIQVLVYIGAIGVLILFAVML), 99–119 (PLAFLVCLLFVAVVVTGAFGT), and 140–160 (IGMLIFTHFVAPFEVLSIVLL).

It belongs to the complex I subunit 6 family. In terms of assembly, the FPO complex is composed of at least 13 different subunits. FpoA, FpoH, FpoJ, FpoK, FpoL, FpoM and FpoN proteins constitute the membrane sector of the complex.

The protein localises to the cell membrane. It carries out the reaction methanophenazine + reduced coenzyme F420-(gamma-L-Glu)(n) = dihydromethanophenazine + oxidized coenzyme F420-(gamma-L-Glu)(n) + H(+). In terms of biological role, component of the F(420)H(2) dehydrogenase (FPO complex) which is part of the energy-conserving F(420)H(2):heterodisulfide oxidoreductase system. The membrane-bound electron transfer system of the complex plays an important role in the metabolism of methylotrophic methanogens when the organisms grow on methanol or methylamines. Catalyzes the oxidation of methanophenazine to dihydromethanophenazine. It shuttles electrons from F(420)H(2), via FAD and iron-sulfur (Fe-S) centers, to methanophenazine (an electron carrier in the membrane). It couples the redox reaction to proton translocation (for every two electrons transferred, two hydrogen ions are translocated across the cytoplasmic membrane), and thus conserves the redox energy in a proton gradient. It also catalyzes the oxidation of F(420)H(2) with quinones such as 2,3-dimethyl-1,4-naphthoquinone, 2-methyl-1,4-naphthoquinone and tetramethyl-p-benzoquinone. This is F(420)H(2) dehydrogenase subunit J (fpoJ) from Methanosarcina mazei (strain ATCC BAA-159 / DSM 3647 / Goe1 / Go1 / JCM 11833 / OCM 88) (Methanosarcina frisia).